Consider the following 549-residue polypeptide: MKNINPTQTSAWQALQKHFDEMKDVTISELFAKDSDRFSKFSATFDDLMLVDFSKNRITEETLAKLQDLAKETDLAGAIKSMFSGEKINRTEDRAVLHVALRNRSNTPIVVDGKDVMPEVNAVLEKMKTFSEAIISGSWKGYTGKPITDVVNIGIGGSDLGPFMVTEALRPYKNHLNMHFVSNVDGTHIAEVLKNVNPETTLFLVASKTFTTQETMTNAHSARDWFLATAGDDKHVAKHFAALSTNAKAVGEFGIDTANMFEFWDWVGGRYSLWSAIGLSIILSVGFDNFVELLSGAHAMDKHFSTTPAEKNLPVLLALIGIWYNNFFGAETEAILPYDQYMHRFAAYFQQGNMESNGKYVDRNGHAVDYQTGPIIWGEPGTNGQHAFYQLIHQGTKMVPCDFIAPAITHNPLSDHHPKLLSNFFAQTEALAFGKSREVVEQEYRDQGKDPATLEHVVPFKVFEGNRPTNSILLREITPFSLGALIALYEHKIFTQGAILNIFTFDQWGVELGKQLANRILPELKDGSEVSSHDSSTNGLINRYKAWRA.

Residue glutamate 355 is the Proton donor of the active site. Residues histidine 386 and lysine 514 contribute to the active site.

The protein belongs to the GPI family.

The protein resides in the cytoplasm. The enzyme catalyses alpha-D-glucose 6-phosphate = beta-D-fructose 6-phosphate. It functions in the pathway carbohydrate biosynthesis; gluconeogenesis. The protein operates within carbohydrate degradation; glycolysis; D-glyceraldehyde 3-phosphate and glycerone phosphate from D-glucose: step 2/4. Functionally, catalyzes the reversible isomerization of glucose-6-phosphate to fructose-6-phosphate. The chain is Glucose-6-phosphate isomerase from Klebsiella pneumoniae (strain 342).